A 633-amino-acid chain; its full sequence is Pescadillo homolog (633 aa).

One can recognise a BRCT domain in the interval 321–414 (RLRTLFKGLK…QLLPTNKYFL (94 aa)). Disordered regions lie at residues 450-470 (HAQSEDESEDDAAAEEEDTVE) and 490-567 (KKYG…LQAR). Phosphoserine is present on residues S453 and S457. 2 stretches are compositionally biased toward acidic residues: residues 454–470 (EDESEDDAAAEEEDTVE) and 498–526 (VNEDEEDSDEEDFDGEEQESDDDDEEELD). Positions 527 to 538 (EKEKRLLEEKQK) are enriched in basic and acidic residues. A compositionally biased stretch (basic residues) spans 545 to 554 (KVHKVNKRQV). A compositionally biased stretch (basic and acidic residues) spans 555-564 (HKAEVDEHRL). A coiled-coil region spans residues 593 to 626 (LLRKKRRTIETDAKEAKKLAKREARKAAAAAAAA).

Belongs to the pescadillo family.

It localises to the nucleus. The protein resides in the nucleolus. It is found in the nucleoplasm. Required for maturation of ribosomal RNAs and formation of the large ribosomal subunit. In Drosophila virilis (Fruit fly), this protein is Pescadillo homolog.